A 178-amino-acid chain; its full sequence is Natriuretic and helokinestatin peptides (178 aa).

The signal sequence occupies residues 1-25 (MNPRLACSTWLPLLLVLFTLDQGRA). 5 propeptides span residues 26 to 58 (NPVE…SEEN), 69 to 73 (ASDEN), 85 to 89 (ASDEN), 103 to 112 (ASEQKGPPFN), and 123 to 146 (AANE…RNKR). 2 disordered regions span residues 69-107 (ASDE…SEQK) and 135-155 (RSFE…GCFG). A disulfide bridge connects residues cysteine 153 and cysteine 169.

In the C-terminal section; belongs to the natriuretic peptide family. As to expression, expressed by the venom gland.

It localises to the secreted. Functionally, helokinestatins antagonize the vasodilatory actions of bradykinin at the B2 bradykinin receptor (BDKRB2), with helokinestatin-1 being the most potent antagonist. Its function is as follows. exhibits hypotensive and vasodepressor activities, possibly by targeting natriuretic peptide receptors NPR1 and NPR2. The chain is Natriuretic and helokinestatin peptides from Heloderma suspectum cinctum (Banded Gila monster).